Consider the following 158-residue polypeptide: Non-secretory ribonuclease (158 aa).

Positions M1–A27 are cleaved as a signal peptide. The Proton acceptor role is filled by H42. Residue Y60 is modified to 3'-nitrotyrosine. K65–T69 is a substrate binding site. N86, N92, and N111 each carry an N-linked (GlcNAc...) asparagine glycan. The active-site Proton donor is H153.

Belongs to the pancreatic ribonuclease family. Interacts with and forms a tight 1:1 complex with RNH1. Dimerization of two such complexes may occur.

Its subcellular location is the lysosome. The protein resides in the cytoplasmic granule. It carries out the reaction an [RNA] containing cytidine + H2O = an [RNA]-3'-cytidine-3'-phosphate + a 5'-hydroxy-ribonucleotide-3'-[RNA].. The catalysed reaction is an [RNA] containing uridine + H2O = an [RNA]-3'-uridine-3'-phosphate + a 5'-hydroxy-ribonucleotide-3'-[RNA].. Functionally, this is a non-secretory ribonuclease. It is a pyrimidine specific nuclease with a slight preference for U. Cytotoxin and helminthotoxin. Possesses a wide variety of biological activities. This is Non-secretory ribonuclease (RNASE2) from Callithrix jacchus (White-tufted-ear marmoset).